We begin with the raw amino-acid sequence, 169 residues long: Desumoylating isopeptidase 1 (169 aa).

The region spanning 8 to 150 (HLVRLYVYDM…LGQALRPLLD (143 aa)) is the PPPDE domain. Histidine 39 is a catalytic residue. The Nuclear export signal 1 motif lies at 84–92 (IFLEYLSSL). Residue cysteine 109 is part of the active site. Residues 140 to 154 (PLGQALRPLLDSVQI) carry the Nuclear export signal 2 motif.

Belongs to the DeSI family. In terms of assembly, homodimer.

It localises to the cytoplasm. The protein resides in the nucleus. It catalyses the reaction S-hexadecanoyl-L-cysteinyl-[protein] + H2O = L-cysteinyl-[protein] + hexadecanoate + H(+). Its function is as follows. Protease which deconjugates SUMO1, SUMO2 and SUMO3 from some substrate proteins. Has isopeptidase but not SUMO-processing activity. Collaborates with ubqln4 in the export of ubiquitinated proteins from the nucleus to the cytoplasm. Exhibits palmitoyl protein thioesterase (S-depalmitoylation) activity towards synthetic substrates 4-methylumbelliferyl-6-S-palmitoyl-beta-D-glucopyranoside and S-depalmitoylation probe 5 (DPP-5). The polypeptide is Desumoylating isopeptidase 1 (Xenopus laevis (African clawed frog)).